The sequence spans 364 residues: Protein RecA (364 aa).

ATP is bound at residue 77–84; it reads GPESSGKT. Residues 343 to 364 form a disordered region; the sequence is DRFLQNGGPDPDDGDGDATAEM. Positions 352 to 364 are enriched in acidic residues; sequence DPDDGDGDATAEM.

Belongs to the RecA family.

The protein localises to the cytoplasm. In terms of biological role, can catalyze the hydrolysis of ATP in the presence of single-stranded DNA, the ATP-dependent uptake of single-stranded DNA by duplex DNA, and the ATP-dependent hybridization of homologous single-stranded DNAs. It interacts with LexA causing its activation and leading to its autocatalytic cleavage. This Rhizobium johnstonii (strain DSM 114642 / LMG 32736 / 3841) (Rhizobium leguminosarum bv. viciae) protein is Protein RecA.